The primary structure comprises 24 residues: Erythromycin resistance leader peptide (24 aa).

Residues 1-14 (MSMGIAARPPRAAL) show a composition bias toward low complexity. Positions 1–24 (MSMGIAARPPRAALLPPPSVPRSR) are disordered. The segment covering 15-24 (LPPPSVPRSR) has biased composition (pro residues).

This peptide is involved in the control mechanism of the synthesis of the macrolide-lincosamide-streptogramin B resistance protein. This Streptomyces fradiae (Streptomyces roseoflavus) protein is Erythromycin resistance leader peptide.